Reading from the N-terminus, the 32-residue chain is Fibrinolytic enzyme (32 aa).

In terms of processing, the N-terminus is blocked.

With respect to regulation, inhibited by phenylmethanesulfonyl fluoride (PMSF). Not inhibited by EDTA, EGTA, beta-mercaptoethanol, indoacetamide, benzamidine, aprotinin, pepstatin A and trypsin inhibitor. Its function is as follows. Plasmin-like serine protease. Has fibrinolytic and fibrinogenolytic but not plasminogenolytic activity. Cleaves after Arg and Lys residues. This Hediste japonica (Polychaete worm) protein is Fibrinolytic enzyme.